Reading from the N-terminus, the 280-residue chain is Probable endonuclease 4 (280 aa).

Histidine 69, histidine 109, glutamate 145, aspartate 179, histidine 182, histidine 216, aspartate 229, histidine 231, and glutamate 261 together coordinate Zn(2+).

It belongs to the AP endonuclease 2 family. The cofactor is Zn(2+).

It carries out the reaction Endonucleolytic cleavage to 5'-phosphooligonucleotide end-products.. In terms of biological role, endonuclease IV plays a role in DNA repair. It cleaves phosphodiester bonds at apurinic or apyrimidinic (AP) sites, generating a 3'-hydroxyl group and a 5'-terminal sugar phosphate. This chain is Probable endonuclease 4, found in Photorhabdus laumondii subsp. laumondii (strain DSM 15139 / CIP 105565 / TT01) (Photorhabdus luminescens subsp. laumondii).